The following is a 248-amino-acid chain: Proteasome subunit alpha type-5 (248 aa).

It belongs to the peptidase T1A family. The 26S proteasome consists of a 20S proteasome core and two 19S regulatory subunits. The 20S proteasome core is composed of 28 subunits that are arranged in four stacked rings, resulting in a barrel-shaped structure. The two end rings are each formed by seven alpha subunits, and the two central rings are each formed by seven beta subunits. The catalytic chamber with the active sites is on the inside of the barrel.

The protein resides in the cytoplasm. The protein localises to the nucleus. In terms of biological role, the proteasome is a multicatalytic proteinase complex which is characterized by its ability to cleave peptides with Arg, Phe, Tyr, Leu, and Glu adjacent to the leaving group at neutral or slightly basic pH. The proteasome has an ATP-dependent proteolytic activity. The polypeptide is Proteasome subunit alpha type-5 (pas-5) (Caenorhabditis elegans).